Consider the following 514-residue polypeptide: Maturase K (514 aa).

It belongs to the intron maturase 2 family. MatK subfamily.

The protein resides in the plastid. It is found in the chloroplast. Functionally, usually encoded in the trnK tRNA gene intron. Probably assists in splicing its own and other chloroplast group II introns. The polypeptide is Maturase K (Plantago argentea (Silver plantain)).